The primary structure comprises 68 residues: Pleurocidin (68 aa).

A signal peptide spans 1 to 22; it reads MKFTATFLMIAIFVLMVEPGEC. Positions 48-68 are excised as a propeptide; that stretch reads GDKQELNKRAVDEDPNVIVFE.

The protein belongs to the pleurocidin family. As to expression, goblet cells.

Its subcellular location is the secreted. In terms of biological role, antimicrobial peptide with potent activity against Gram-positive and Gram-negative bacteria. Activity against E.coli and B.subtilis. Weaker activity against L.mucor, s.marcescens and P.aeruginosa. May play a role in innate host defense. This is Pleurocidin (ple2) from Pseudopleuronectes americanus (Winter flounder).